Reading from the N-terminus, the 403-residue chain is 8-amino-7-oxononanoate synthase (403 aa).

Position 25 (Arg-25) interacts with substrate. Residue 112–113 coordinates pyridoxal 5'-phosphate; the sequence is GY. His-137 contributes to the substrate binding site. The pyridoxal 5'-phosphate site is built by Ser-182, His-210, and Thr-239. Lys-242 carries the post-translational modification N6-(pyridoxal phosphate)lysine. Thr-358 contributes to the substrate binding site.

It belongs to the class-II pyridoxal-phosphate-dependent aminotransferase family. BioF subfamily. In terms of assembly, homodimer. Pyridoxal 5'-phosphate is required as a cofactor.

The enzyme catalyses 6-carboxyhexanoyl-[ACP] + L-alanine + H(+) = (8S)-8-amino-7-oxononanoate + holo-[ACP] + CO2. It functions in the pathway cofactor biosynthesis; biotin biosynthesis. Functionally, catalyzes the decarboxylative condensation of pimeloyl-[acyl-carrier protein] and L-alanine to produce 8-amino-7-oxononanoate (AON), [acyl-carrier protein], and carbon dioxide. The polypeptide is 8-amino-7-oxononanoate synthase (Marinomonas sp. (strain MWYL1)).